A 452-amino-acid chain; its full sequence is Exodeoxyribonuclease 7 large subunit (452 aa).

This sequence belongs to the XseA family. As to quaternary structure, heterooligomer composed of large and small subunits.

It localises to the cytoplasm. The enzyme catalyses Exonucleolytic cleavage in either 5'- to 3'- or 3'- to 5'-direction to yield nucleoside 5'-phosphates.. In terms of biological role, bidirectionally degrades single-stranded DNA into large acid-insoluble oligonucleotides, which are then degraded further into small acid-soluble oligonucleotides. This Bacillus mycoides (strain KBAB4) (Bacillus weihenstephanensis) protein is Exodeoxyribonuclease 7 large subunit.